A 334-amino-acid chain; its full sequence is Ketol-acid reductoisomerase (NADP(+)) (334 aa).

The KARI N-terminal Rossmann domain maps to 2 to 181 (TKVYYDQSVE…GATRAGVIET (180 aa)). NADP(+)-binding positions include 25–28 (YGSQ), arginine 48, serine 52, and 82–85 (DEIQ). The active site involves histidine 107. NADP(+) is bound at residue glycine 133. A KARI C-terminal knotted domain is found at 182–327 (TFKEETETDL…RELRKMMPFI (146 aa)). Residues aspartate 190, glutamate 194, glutamate 226, and glutamate 230 each coordinate Mg(2+). Position 251 (serine 251) interacts with substrate.

The protein belongs to the ketol-acid reductoisomerase family. Mg(2+) is required as a cofactor.

It catalyses the reaction (2R)-2,3-dihydroxy-3-methylbutanoate + NADP(+) = (2S)-2-acetolactate + NADPH + H(+). The enzyme catalyses (2R,3R)-2,3-dihydroxy-3-methylpentanoate + NADP(+) = (S)-2-ethyl-2-hydroxy-3-oxobutanoate + NADPH + H(+). The protein operates within amino-acid biosynthesis; L-isoleucine biosynthesis; L-isoleucine from 2-oxobutanoate: step 2/4. It participates in amino-acid biosynthesis; L-valine biosynthesis; L-valine from pyruvate: step 2/4. Functionally, involved in the biosynthesis of branched-chain amino acids (BCAA). Catalyzes an alkyl-migration followed by a ketol-acid reduction of (S)-2-acetolactate (S2AL) to yield (R)-2,3-dihydroxy-isovalerate. In the isomerase reaction, S2AL is rearranged via a Mg-dependent methyl migration to produce 3-hydroxy-3-methyl-2-ketobutyrate (HMKB). In the reductase reaction, this 2-ketoacid undergoes a metal-dependent reduction by NADPH to yield (R)-2,3-dihydroxy-isovalerate. This chain is Ketol-acid reductoisomerase (NADP(+)), found in Staphylococcus haemolyticus (strain JCSC1435).